A 346-amino-acid chain; its full sequence is Peripherin-2 (346 aa).

Residues 1–18 (MALLKVKFDQKKRVKLAQ) lie on the Cytoplasmic side of the membrane. The helical transmembrane segment at 19 to 41 (GLWLMNWFSVLAGIIIFGLGLFL) threads the bilayer. Residues 42–62 (KIELRKRSDVMNNSESHFVPN) are Lumenal-facing. N-linked (GlcNAc...) asparagine glycosylation occurs at N53. A helical transmembrane segment spans residues 63–79 (SLIGVGVLSCVFNSLAG). The Cytoplasmic portion of the chain corresponds to 80–101 (KICYDALDPAKYAKWKPWLKPY). A helical transmembrane segment spans residues 102 to 122 (LAVCVLFNVVLFLVALCCFLL). Residues 123–264 (RGSLESTLAH…LSYYSNLMNT (142 aa)) are Lumenal-facing. N-linked (GlcNAc...) asparagine glycosylation is found at N229 and N263. A helical membrane pass occupies residues 265–283 (TGAVTLLVWLFEVTITVGL). The Cytoplasmic segment spans residues 284-346 (RYLHTALEGM…EDAGQAPAAG (63 aa)). Residues 341 to 346 (QAPAAG) form an interaction with MREG region.

Belongs to the PRPH2/ROM1 family. Homodimer; disulfide-linked. Forms a homotetramer. Forms a heterotetramer with ROM1. Homotetramer and heterotetramer core complexes go on to form higher order complexes by formation of intermolecular disulfide bonds. Interacts with MREG. Interacts with STX3. Interacts with SNAP25. As to expression, retina (photoreceptor). In rim region of ROS (rod outer segment) disks.

The protein localises to the membrane. It is found in the cell projection. Its subcellular location is the cilium. It localises to the photoreceptor outer segment. The protein resides in the photoreceptor inner segment. Functionally, essential for retina photoreceptor outer segment disk morphogenesis, may also play a role with ROM1 in the maintenance of outer segment disk structure. Required for the maintenance of retinal outer nuclear layer thickness. Required for the correct development and organization of the photoreceptor inner segment. In Bos taurus (Bovine), this protein is Peripherin-2 (PRPH2).